Here is a 348-residue protein sequence, read N- to C-terminus: Fructose-1,6-bisphosphatase class 1 (348 aa).

Mg(2+) contacts are provided by Glu104, Asp126, Leu128, and Asp129. Substrate is bound by residues 129-132, Asn221, Tyr249, and Lys279; that span reads DGSS. Residue Glu285 coordinates Mg(2+).

This sequence belongs to the FBPase class 1 family. As to quaternary structure, homotetramer. Mg(2+) serves as cofactor.

It localises to the cytoplasm. The enzyme catalyses beta-D-fructose 1,6-bisphosphate + H2O = beta-D-fructose 6-phosphate + phosphate. It functions in the pathway carbohydrate biosynthesis; Calvin cycle. The sequence is that of Fructose-1,6-bisphosphatase class 1 from Thermosynechococcus vestitus (strain NIES-2133 / IAM M-273 / BP-1).